The sequence spans 118 residues: Large ribosomal subunit protein uL18 (118 aa).

Residues 1–25 (MISKPDKNKIRQKRHRRVRGKLSGT) are disordered. A compositionally biased stretch (basic residues) spans 10-20 (IRQKRHRRVRG).

The protein belongs to the universal ribosomal protein uL18 family. As to quaternary structure, part of the 50S ribosomal subunit; part of the 5S rRNA/L5/L18/L25 subcomplex. Contacts the 5S and 23S rRNAs.

This is one of the proteins that bind and probably mediate the attachment of the 5S RNA into the large ribosomal subunit, where it forms part of the central protuberance. This is Large ribosomal subunit protein uL18 from Streptococcus pyogenes serotype M5 (strain Manfredo).